A 166-amino-acid polypeptide reads, in one-letter code: Urease accessory protein UreE (166 aa).

The segment at 135 to 156 (EQGAYGGGHHHSHHGDEEFNYG) is disordered.

This sequence belongs to the UreE family.

The protein resides in the cytoplasm. Its function is as follows. Involved in urease metallocenter assembly. Binds nickel. Probably functions as a nickel donor during metallocenter assembly. In Ectopseudomonas mendocina (strain ymp) (Pseudomonas mendocina), this protein is Urease accessory protein UreE.